Consider the following 566-residue polypeptide: OTU domain-containing protein 5 (566 aa).

2 disordered regions span residues 1 to 117 (MTIL…GDAL) and 145 to 175 (GPGH…GAGY). Residues 11-30 (PPDADPANEPPPPGPLPPAP) show a composition bias toward pro residues. Residues 34–47 (AGVGVGGGGTGVGG) show a composition bias toward gly residues. The span at 63–75 (ASPPPQGPLPGPP) shows a compositional bias: pro residues. Ser64 is modified (phosphoserine). Over residues 84 to 97 (AVPPGAVAGPRPQQ) the composition is skewed to low complexity. The segment covering 105–115 (GPGGPGGGPGD) has biased composition (gly residues). Ser165 carries the phosphoserine modification. Residue Tyr175 is modified to Phosphotyrosine. Ser177 carries the post-translational modification Phosphoserine. A Phosphothreonine modification is found at Thr195. The 124-residue stretch at 213–336 (FIIKQMKEDG…NIHYNSVVNP (124 aa)) folds into the OTU domain. The tract at residues 218 to 224 (MKEDGAC) is cys-loop. The active site involves Asp221. Cys224 functions as the Nucleophile in the catalytic mechanism. The segment at 273-283 (KRKNNCHGNHI) is variable-loop. A Phosphoserine modification is found at Ser323. The his-loop stretch occupies residues 324-329 (YHRNIH). The active site involves His329. Ser332 and Ser370 each carry phosphoserine. The segment at 413–499 (ARQVRGPSQP…TSSQFSAGGD (87 aa)) is disordered. Composition is skewed to low complexity over residues 425-438 (ASAT…AASS) and 445-457 (SRSP…ASSP). Ser447 carries the phosphoserine modification. Thr502 is subject to Phosphothreonine. Position 503 is a phosphoserine (Ser503).

The protein belongs to the peptidase C85 family. Interacts with TRAF3. Phosphorylation at Ser-177 is required for deubiquitinating activity. Phosphorylation at Ser-323, Ser-332 and Ser-503 by MTOR promotes its activity.

It localises to the nucleus. It catalyses the reaction Thiol-dependent hydrolysis of ester, thioester, amide, peptide and isopeptide bonds formed by the C-terminal Gly of ubiquitin (a 76-residue protein attached to proteins as an intracellular targeting signal).. Its activity is regulated as follows. Inhibited by N-ethyl-maleimide (NEM). In terms of biological role, deubiquitinating enzyme that functions as a negative regulator of the innate immune system. Has peptidase activity towards 'Lys-48'- and 'Lys-63'-linked polyubiquitin chains. Can also cleave 'Lys-11'-linked ubiquitin chains (in vitro). Acts via TRAF3 deubiquitination and subsequent suppression of type I interferon (IFN) production. Controls neuroectodermal differentiation through cleaving 'Lys-48'-linked ubiquitin chains to counteract degradation of select chromatin regulators such as ARID1A, HDAC2 and HCF1. Acts as a positive regulator of mTORC1 and mTORC2 signaling following phosphorylation by MTOR: acts by mediating deubiquitination of BTRC, leading to its stability. This is OTU domain-containing protein 5 from Mus musculus (Mouse).